The primary structure comprises 168 residues: MSAHKTPDKAFPVSWDQFHRDCRALSWRLNETGPFHAVVAITRGGLVPAAIVARELGVRVIDTVCIASYDHLHKSELKVLKGISDMTVKLGGGSGRNLLVVDDLVDTGATARVVRGMIPDAHFATVYAKPLGKPLVDTFITEVSQDTWIYFPWDLDLAFAPPLRDGAA.

5-phospho-alpha-D-ribose 1-diphosphate-binding positions include 43–44 (RG) and 102–110 (DDLVDTGAT). Position 103 (D103) interacts with Mg(2+). Guanine contacts are provided by D106 and I149. 2 residues coordinate xanthine: D106 and I149. Residues 106–110 (DTGAT) and 148–149 (WI) each bind GMP.

The protein belongs to the purine/pyrimidine phosphoribosyltransferase family. XGPT subfamily. As to quaternary structure, homotetramer. Requires Mg(2+) as cofactor.

Its subcellular location is the cell inner membrane. The catalysed reaction is GMP + diphosphate = guanine + 5-phospho-alpha-D-ribose 1-diphosphate. It carries out the reaction XMP + diphosphate = xanthine + 5-phospho-alpha-D-ribose 1-diphosphate. The enzyme catalyses IMP + diphosphate = hypoxanthine + 5-phospho-alpha-D-ribose 1-diphosphate. It functions in the pathway purine metabolism; GMP biosynthesis via salvage pathway; GMP from guanine: step 1/1. It participates in purine metabolism; XMP biosynthesis via salvage pathway; XMP from xanthine: step 1/1. Its function is as follows. Purine salvage pathway enzyme that catalyzes the transfer of the ribosyl-5-phosphate group from 5-phospho-alpha-D-ribose 1-diphosphate (PRPP) to the N9 position of the 6-oxopurines guanine and xanthine to form the corresponding ribonucleotides GMP (guanosine 5'-monophosphate) and XMP (xanthosine 5'-monophosphate), with the release of PPi. To a lesser extent, also acts on hypoxanthine. This Nitrobacter winogradskyi (strain ATCC 25391 / DSM 10237 / CIP 104748 / NCIMB 11846 / Nb-255) protein is Xanthine-guanine phosphoribosyltransferase.